The sequence spans 421 residues: D-aspartate ligase (421 aa).

The ATP-grasp domain maps to 130–332; the sequence is YEVCEEYDLP…LARFVTEDRV (203 aa). An ATP-binding site is contributed by 161-224; it reads PFEFPVALKP…QDFIPGDDSN (64 aa). The Mg(2+) site is built by Asp-290, Glu-304, and Asn-306.

The cofactor is Mg(2+).

The enzyme catalyses [beta-GlcNAc-(1-&gt;4)-Mur2Ac(oyl-L-Ala-gamma-D-Glu-L-Lys-D-Ala-D-Ala)](n) + n D-aspartate + n ATP = [beta-GlcNAc-(1-&gt;4)-Mur2Ac(oyl-L-Ala-gamma-D-Glu-6-N-(beta-D-Asp)-L-Lys-D-Ala-D-Ala)]n + n ADP + n phosphate + n H(+). It functions in the pathway cell wall biogenesis; peptidoglycan biosynthesis. Its function is as follows. Catalyzes the addition of D-aspartate onto the lysine residue in the peptidoglycan precursor UDP-MurNAc-pentapeptide. The ligation occurs between the beta-carboxylate of D-Asp and the epsilon-amino group of L-Lys. Is highly specific for D-aspartate, as L-aspartate, D-glutamate, D-alanine, D-iso-asparagine and D-malate are not substrates. The protein is D-aspartate ligase of Enterococcus faecium (strain Aus0004).